The following is a 521-amino-acid chain: U4/U6 small nuclear ribonucleoprotein Prp4 (521 aa).

K26 carries the N6-acetyllysine modification. 7 WD repeats span residues 228 to 267 (GDDR…LLHT), 270 to 317 (GHNT…PVAD), 320 to 359 (GHTV…EILH), 362 to 401 (GHSM…CIMF), 404 to 443 (GHLK…CVYT), 446 to 486 (AHQN…PLKT), and 489 to 521 (GHEG…WMAE).

As to quaternary structure, component of the precatalytic spliceosome (spliceosome B complex). Component of the U4/U6-U5 tri-snRNP complex, a building block of the precatalytic spliceosome (spliceosome B complex). The U4/U6-U5 tri-snRNP complex is composed of the U4, U6 and U5 snRNAs and at least PRPF3, PRPF4, PRPF6, PRPF8, PRPF31, SNRNP200, TXNL4A, SNRNP40, SNRPB, SNRPD1, SNRPD2, SNRPD3, SNRPE, SNRPF, SNRPG, DDX23, CD2BP2, PPIH, SNU13, EFTUD2, SART1 and USP39, plus LSM2, LSM3, LSM4, LSM5, LSM6, LSM7 and LSM8. Interacts directly with PRPF18, PPIH and PRPF3. Part of a heteromeric complex containing PPIH, PRPF3 and PRPF4 that is stable in the absence of RNA. Interacts with ERCC6.

The protein resides in the nucleus. The protein localises to the nucleus speckle. In terms of biological role, plays a role in pre-mRNA splicing as component of the U4/U6-U5 tri-snRNP complex that is involved in spliceosome assembly, and as component of the precatalytic spliceosome (spliceosome B complex). This is U4/U6 small nuclear ribonucleoprotein Prp4 (Prpf4) from Mus musculus (Mouse).